We begin with the raw amino-acid sequence, 561 residues long: Urocanate hydratase (561 aa).

NAD(+) contacts are provided by residues 52 to 53 (GG), Gln-130, 176 to 178 (GMG), Glu-196, Arg-201, 242 to 243 (NA), 263 to 267 (QTSAH), 273 to 274 (YL), and Tyr-322. The active site involves Cys-410. Gly-492 serves as a coordination point for NAD(+).

It belongs to the urocanase family. It depends on NAD(+) as a cofactor.

The protein resides in the cytoplasm. It carries out the reaction 4-imidazolone-5-propanoate = trans-urocanate + H2O. The protein operates within amino-acid degradation; L-histidine degradation into L-glutamate; N-formimidoyl-L-glutamate from L-histidine: step 2/3. Catalyzes the conversion of urocanate to 4-imidazolone-5-propionate. The sequence is that of Urocanate hydratase from Salmonella gallinarum (strain 287/91 / NCTC 13346).